A 127-amino-acid polypeptide reads, in one-letter code: Auxin-responsive protein SAUR76 (127 aa).

Residues 20 to 40 (SFNTKPNQPPAQTNHSRSSAV) are disordered.

The protein belongs to the ARG7 family. In terms of tissue distribution, expressed in cotyledons, hypocotyls and roots of young seedlings. Expressed in emerging lateral root, leaves, flowers, stamens and filaments.

Its subcellular location is the nucleus. The protein resides in the cytoplasm. It localises to the cell membrane. Its function is as follows. May be involved in the regulation of ethylene receptor signaling. Promotes cell expansion and plant growth. Involved in the regulation of cell elongation. The sequence is that of Auxin-responsive protein SAUR76 from Arabidopsis thaliana (Mouse-ear cress).